Reading from the N-terminus, the 313-residue chain is Bifunctional pinoresinol-lariciresinol reductase 1 (313 aa).

NADP(+) is bound by residues 11-17, arginine 36, and lysine 45; that span reads GGTGYIG. Catalysis depends on lysine 138, which acts as the Proton acceptor. Position 142 (arginine 142) interacts with NADP(+). Histidine 271 is a substrate binding site.

This sequence belongs to the NmrA-type oxidoreductase family. Isoflavone reductase subfamily. In terms of assembly, dimer.

The catalysed reaction is (+)-lariciresinol + NADP(+) = (+)-pinoresinol + NADPH + H(+). It catalyses the reaction (-)-lariciresinol + NADP(+) = (-)-pinoresinol + NADPH + H(+). The enzyme catalyses (+)-secoisolariciresinol + NADP(+) = (-)-lariciresinol + NADPH + H(+). Its function is as follows. Reductase involved in lignan biosynthesis. Catalyzes the enantioselective sequential conversion of (-)-pinoresinol into (-)-lariciresinol and of (-)-lariciresinol into (+)-secoisolariciresinol. Can also convert with a lower efficiency (+)-pinoresinol into (+)-lariciresinol, but not (+)-lariciresinol into (-)-secoisolariciresinol. Abstracts the 4R-hydride from the NADPH cofactor during catalysis. The polypeptide is Bifunctional pinoresinol-lariciresinol reductase 1 (PLR_Tp1) (Thuja plicata (Western red-cedar)).